The primary structure comprises 975 residues: Leucine-zipper-like transcriptional regulator 1 homolog (975 aa).

The segment covering 16–32 (RGGGGGGCGGGGAGGSA) has biased composition (gly residues). Disordered stretches follow at residues 16-41 (RGGG…TSGS) and 158-186 (MSSS…SCSS). A compositionally biased stretch (low complexity) spans 174–186 (ASSSHPPGSSCSS). Kelch repeat units follow at residues 263 to 312 (AMFV…VAGS), 314 to 369 (MFIF…VYDN), 370 to 417 (KMWI…PVAV), 421 to 467 (AMYV…PSRR), 478 to 524 (FLYV…FHAS), and 530 to 581 (AMYI…FIVG). BTB domains are found at residues 574-670 (CDIQ…DLKD) and 801-870 (CDIS…KMPP).

It belongs to the LZTR1 family. Component of some BCR (BTB-CUL3-RBX1) E3 ubiquitin-protein ligase complex. Expressed in Rdl-expressing neurons of the mushroom body, the neurons projecting to the LC9 optic glomerulus and in a neuronal cluster near the subesophageal ganglion (at protein level).

The protein operates within protein modification; protein ubiquitination. In terms of biological role, inhibitor of Ras signaling. Acts as a substrate-specific adapter of a BCR (BTB-CUL3-RBX1) E3 ubiquitin-protein ligase complex that mediates ubiquitination of Ras. Together with Nf1, plays an important role for normal sleep behavior, mainly during the night. Might affect sleep by modulating GABA signaling in Rdl-expressing neurons. Might play a role in the regulation of brain glycogen metabolism and organismal levels of triglycerides. The polypeptide is Leucine-zipper-like transcriptional regulator 1 homolog (Drosophila melanogaster (Fruit fly)).